The sequence spans 423 residues: Probable sodium/metabolite cotransporter BASS3, chloroplastic (423 aa).

The N-terminal 45 residues, 1–45 (MAAAVAASSSSSSSSCAAVGVATASHPHRHRQARFVVSPPAPASP), are a transit peptide targeting the chloroplast. The next 9 membrane-spanning stretches (helical) occupy residues 106–126 (ALLPLVVAATAVAALGNPATF), 138–158 (LGGIMLSIGIKLSIDDFALAF), 165–187 (TIGYMAQYIVKPLMGVLIARAFG), 192–214 (FFAGFVLTCCVSGAQLSSYASFL), 231–251 (ISSVVVTPVLTGLLIGSVVPV), 254–274 (IAMAKSILQVVLVPVTLGLLL), 287–307 (PVMPFVAMLCTSLCIGSPLAI), 318–338 (FLLLLPIVTFHIAAFIVGYWI), and 380–400 (VPAACSVVIMAIFGLTLASYW).

Belongs to the bile acid:sodium symporter (BASS) (TC 2.A.28) family.

The protein localises to the membrane. Its subcellular location is the plastid. It is found in the chloroplast envelope. May function as sodium-coupled metabolite transporter across the chloroplast envelope. The protein is Probable sodium/metabolite cotransporter BASS3, chloroplastic (BASS3) of Oryza sativa subsp. japonica (Rice).